Reading from the N-terminus, the 35-residue chain is uncharacterized protein (35 aa).

A helical transmembrane segment spans residues 14 to 34; the sequence is VVVLLAICGAMLLLRWAAMIW.

It localises to the membrane. This is an uncharacterized protein from Escherichia coli (strain K12).